We begin with the raw amino-acid sequence, 527 residues long: AAA ATPase forming ring-shaped complexes (527 aa).

Positions 1-18 are enriched in low complexity; sequence MVTMSSPTDSSPSNSFSD. The tract at residues 1–38 is disordered; sequence MVTMSSPTDSSPSNSFSDFNREEQSRLSDEVRQLKRTN. Positions 19–33 are enriched in basic and acidic residues; the sequence is FNREEQSRLSDEVRQ. Positions 21–53 form a coiled coil; it reads REEQSRLSDEVRQLKRTNSDLGARNAKLAEMLK. 257–262 provides a ligand contact to ATP; that stretch reads GCGKTL. Positions 492–515 are disordered; sequence DENQQSEDLPNTSNPDEWSRITGR. The segment covering 497 to 507 has biased composition (polar residues); sequence SEDLPNTSNPD.

Belongs to the AAA ATPase family. In terms of assembly, homohexamer. Assembles into a hexameric ring structure.

In Corynebacterium glutamicum (strain R), this protein is AAA ATPase forming ring-shaped complexes.